A 253-amino-acid polypeptide reads, in one-letter code: Imidazole glycerol phosphate synthase subunit HisF (253 aa).

Catalysis depends on residues D11 and D130.

The protein belongs to the HisA/HisF family. Heterodimer of HisH and HisF.

Its subcellular location is the cytoplasm. The catalysed reaction is 5-[(5-phospho-1-deoxy-D-ribulos-1-ylimino)methylamino]-1-(5-phospho-beta-D-ribosyl)imidazole-4-carboxamide + L-glutamine = D-erythro-1-(imidazol-4-yl)glycerol 3-phosphate + 5-amino-1-(5-phospho-beta-D-ribosyl)imidazole-4-carboxamide + L-glutamate + H(+). Its pathway is amino-acid biosynthesis; L-histidine biosynthesis; L-histidine from 5-phospho-alpha-D-ribose 1-diphosphate: step 5/9. Its function is as follows. IGPS catalyzes the conversion of PRFAR and glutamine to IGP, AICAR and glutamate. The HisF subunit catalyzes the cyclization activity that produces IGP and AICAR from PRFAR using the ammonia provided by the HisH subunit. This is Imidazole glycerol phosphate synthase subunit HisF from Clostridium botulinum (strain Kyoto / Type A2).